The primary structure comprises 591 residues: Metastasis-associated protein MTA3 (591 aa).

The BAH domain maps to 1–147; it reads MAANMYRVGD…PSVKTLLADK (147 aa). One can recognise an ELM2 domain in the interval 148-258; the sequence is GEIRVGPKYQ…SAISVLVPLG (111 aa). Positions 265 to 317 constitute an SANT domain; sequence DEMEEWSASEACLFEEALEKYGKDFNDIRQDFLPWKSLTSIIEYYYMWKTTDR. Residues 377-404 form a GATA-type; atypical zinc finger; the sequence is CESCYATQSHQWYSWGPPNMQCRLCATC. A disordered region spans residues 417–456; it reads PTQSDEEKSPSPTAEDPRARSHMSRQALQGMPVRNTGSPK. Positions 421–435 are enriched in basic and acidic residues; it reads DEEKSPSPTAEDPRA. A phosphoserine mark is found at Ser425 and Ser427. Thr452 carries the phosphothreonine modification. A Phosphoserine modification is found at Ser516.

It belongs to the metastasis-associated protein family. In terms of assembly, component of the nucleosome remodeling and deacetylase (NuRD) repressor complex, composed of core proteins MTA1, MTA2, MTA3, RBBP4, RBBP7, HDAC1, HDAC2, MBD2, MBD3, and peripherally associated proteins CDK2AP1, CDK2AP2, GATAD2A, GATAD2B, CHD3, CHD4 and CHD5. The exact stoichiometry of the NuRD complex is unknown, and some subunits such as MBD2 and MBD3, GATAD2A and GATAD2B, and CHD3, CHD4 and CHD5 define mutually exclusive NuRD complexes. Interacts with BCL6. Interacts with NACC2. Interacts with PWWP2B. Expressed in heart, brain, spleen, lung, liver and kidney.

The protein localises to the nucleus. The protein resides in the cytoplasm. In terms of biological role, acts as a component of the histone deacetylase NuRD complex which participates in the remodeling of chromatin. Plays a role in maintenance of the normal epithelial architecture through the repression of SNAI1 transcription in a histone deacetylase-dependent manner, and thus the regulation of E-cadherin levels. Contributes to transcriptional repression by BCL6. This is Metastasis-associated protein MTA3 (Mta3) from Mus musculus (Mouse).